We begin with the raw amino-acid sequence, 377 residues long: RNA polymerase sigma factor SigA (377 aa).

The tract at residues 72–92 (EVSNLRQGEDHDGNDNDDFNF) is disordered. The interval 144–214 (LAEANLRLVV…TRAIADQART (71 aa)) is sigma-70 factor domain-2. Residues 168-171 (DLIQ) carry the Interaction with polymerase core subunit RpoC motif. The interval 223–299 (ETINKLIRVS…DQEALTPADA (77 aa)) is sigma-70 factor domain-3. The segment at 312–365 (VLDTLTEREENVLRLRFGLDDGRTRTLEEVGKVFGVTRERIRQIEAKALRKLRH) is sigma-70 factor domain-4. Residues 338 to 357 (LEEVGKVFGVTRERIRQIEA) constitute a DNA-binding region (H-T-H motif).

The protein belongs to the sigma-70 factor family. RpoD/SigA subfamily. In terms of assembly, interacts transiently with the RNA polymerase catalytic core.

The protein resides in the cytoplasm. Functionally, sigma factors are initiation factors that promote the attachment of RNA polymerase to specific initiation sites and are then released. This sigma factor is the primary sigma factor during exponential growth. The sequence is that of RNA polymerase sigma factor SigA from Bacillus sp.